Consider the following 291-residue polypeptide: Transmembrane protein 41B (291 aa).

Basic and acidic residues predominate over residues 1–11 (MAKGRVAERSQ). The interval 1–38 (MAKGRVAERSQTEMLHSTPAGDRAVGTQGSAAPGNKDH) is disordered. The residue at position 18 (threonine 18) is a Phosphothreonine. 6 helical membrane-spanning segments follow: residues 52-72 (TSLL…FLVY), 109-129 (FYVQ…TFAI), 147-169 (LALF…LSYL), 197-217 (LINY…FINI), 225-245 (PLKV…FVAI), and 262-282 (SWNS…PAIF). The interval 140-251 (GFLYPFPLAL…FVAIKAGTTL (112 aa)) is VTT domain; required for its function in autophagy.

Belongs to the TMEM41 family. In terms of assembly, interacts with VMP1. Interacts with COPA, COPB1, VDAC1 and ERLIN2. Interacts with ATG2A. Interacts with SURF4.

The protein localises to the endoplasmic reticulum membrane. The protein resides in the endomembrane system. The catalysed reaction is a 1,2-diacyl-sn-glycero-3-phospho-L-serine(in) = a 1,2-diacyl-sn-glycero-3-phospho-L-serine(out). It carries out the reaction cholesterol(in) = cholesterol(out). It catalyses the reaction a 1,2-diacyl-sn-glycero-3-phosphocholine(in) = a 1,2-diacyl-sn-glycero-3-phosphocholine(out). The enzyme catalyses a 1,2-diacyl-sn-glycero-3-phosphoethanolamine(in) = a 1,2-diacyl-sn-glycero-3-phosphoethanolamine(out). Its function is as follows. Phospholipid scramblase involved in lipid homeostasis and membrane dynamics processes. Has phospholipid scramblase activity toward cholesterol and phosphatidylserine, as well as phosphatidylethanolamine and phosphatidylcholine. Required for autophagosome formation: participates in early stages of autophagosome biogenesis at the endoplasmic reticulum (ER) membrane by reequilibrating the leaflets of the ER as lipids are extracted by ATG2 (ATG2A or ATG2B) to mediate autophagosome assembly. In addition to autophagy, involved in other processes in which phospholipid scramblase activity is required. Required for normal motor neuron development. The protein is Transmembrane protein 41B of Rattus norvegicus (Rat).